The primary structure comprises 289 residues: Zinc finger matrin-type protein 3 (289 aa).

Residues 1-59 (MILLQHAGLPPPKRPSSSPPMSVAARSTGALQLPPQKPFGQEASLPLAGEEEPPKGGEQ) are disordered. Residues 9-18 (LPPPKRPSSS) show a composition bias toward pro residues. 2 consecutive Matrin-type zinc fingers follow at residues 70-100 (LYCK…KLRN) and 147-177 (DYCK…RLRL). Positions 180–191 (AQSNSFSDSSEV) are enriched in polar residues. Residues 180 to 200 (AQSNSFSDSSEVGQRRTRKEG) form a disordered region. The Matrin-type 3 zinc-finger motif lies at 246–276 (FYCSMCNVGAGEEVEFRQHLESKQHKSKVSE).

Interacts with dsRNA.

The protein resides in the nucleus. It localises to the nucleolus. Its function is as follows. Acts as a bona fide target gene of p53/TP53. May play a role in the TP53-dependent growth regulatory pathway. May contribute to TP53-mediated apoptosis by regulation of TP53 expression and translocation to the nucleus and nucleolus. The chain is Zinc finger matrin-type protein 3 from Bos taurus (Bovine).